Here is a 254-residue protein sequence, read N- to C-terminus: Ribonuclease PH (254 aa).

Residues Arg86 and 124 to 126 each bind phosphate; that span reads GTR.

This sequence belongs to the RNase PH family. As to quaternary structure, homohexameric ring arranged as a trimer of dimers.

It catalyses the reaction tRNA(n+1) + phosphate = tRNA(n) + a ribonucleoside 5'-diphosphate. Phosphorolytic 3'-5' exoribonuclease that plays an important role in tRNA 3'-end maturation. Removes nucleotide residues following the 3'-CCA terminus of tRNAs; can also add nucleotides to the ends of RNA molecules by using nucleoside diphosphates as substrates, but this may not be physiologically important. Probably plays a role in initiation of 16S rRNA degradation (leading to ribosome degradation) during starvation. The polypeptide is Ribonuclease PH (Carboxydothermus hydrogenoformans (strain ATCC BAA-161 / DSM 6008 / Z-2901)).